A 206-amino-acid chain; its full sequence is Cytidylate kinase (206 aa).

ATP is bound at residue Gly9 to Thr17.

It belongs to the cytidylate kinase family. Type 1 subfamily.

It is found in the cytoplasm. The catalysed reaction is CMP + ATP = CDP + ADP. The enzyme catalyses dCMP + ATP = dCDP + ADP. This chain is Cytidylate kinase, found in Cereibacter sphaeroides (strain ATCC 17023 / DSM 158 / JCM 6121 / CCUG 31486 / LMG 2827 / NBRC 12203 / NCIMB 8253 / ATH 2.4.1.) (Rhodobacter sphaeroides).